Reading from the N-terminus, the 135-residue chain is DNA-directed RNA polymerase subunit omega (135 aa).

The tract at residues 84-106 (IAGHSSHVSPSRSSRHTGLGKSF) is disordered.

The protein belongs to the RNA polymerase subunit omega family. In terms of assembly, the RNAP catalytic core consists of 2 alpha, 1 beta, 1 beta' and 1 omega subunit. When a sigma factor is associated with the core the holoenzyme is formed, which can initiate transcription.

The catalysed reaction is RNA(n) + a ribonucleoside 5'-triphosphate = RNA(n+1) + diphosphate. Promotes RNA polymerase assembly. Latches the N- and C-terminal regions of the beta' subunit thereby facilitating its interaction with the beta and alpha subunits. This Anaplasma phagocytophilum (strain HZ) protein is DNA-directed RNA polymerase subunit omega.